The following is a 484-amino-acid chain: tRNA-2-methylthio-N(6)-dimethylallyladenosine synthase (484 aa).

The region spanning 36 to 153 is the MTTase N-terminal domain; that stretch reads GKLYIKTHGC…LPELIRARRE (118 aa). 6 residues coordinate [4Fe-4S] cluster: cysteine 45, cysteine 82, cysteine 116, cysteine 190, cysteine 194, and cysteine 197. In terms of domain architecture, Radical SAM core spans 176 to 415; it reads RAEGPSAFVS…HINAHAASIS (240 aa). Positions 416–479 constitute a TRAM domain; that stretch reads QSMVGSVQRV…SNSLRGRIQL (64 aa). Residues 428 to 450 are disordered; the sequence is EGPSRRDPNELTGKSENMRPVNF.

Belongs to the methylthiotransferase family. MiaB subfamily. Monomer. Requires [4Fe-4S] cluster as cofactor.

It is found in the cytoplasm. It catalyses the reaction N(6)-dimethylallyladenosine(37) in tRNA + (sulfur carrier)-SH + AH2 + 2 S-adenosyl-L-methionine = 2-methylsulfanyl-N(6)-dimethylallyladenosine(37) in tRNA + (sulfur carrier)-H + 5'-deoxyadenosine + L-methionine + A + S-adenosyl-L-homocysteine + 2 H(+). Its function is as follows. Catalyzes the methylthiolation of N6-(dimethylallyl)adenosine (i(6)A), leading to the formation of 2-methylthio-N6-(dimethylallyl)adenosine (ms(2)i(6)A) at position 37 in tRNAs that read codons beginning with uridine. This chain is tRNA-2-methylthio-N(6)-dimethylallyladenosine synthase, found in Xanthomonas axonopodis pv. citri (strain 306).